Reading from the N-terminus, the 193-residue chain is Ion-translocating oxidoreductase complex subunit A (193 aa).

The next 6 membrane-spanning stretches (helical) occupy residues 5-25, 39-59, 72-92, 102-122, 134-154, and 171-191; these read ILLIISTALINNFVLVKFLGL, IGMGLATMFVLTVASLCAYLV, LRTLIFILVIAVVVQFTEMVI, LLGIFLPLITTNCAVLGVALL, VIYGFSASLGFSLVLVLFAAL, and SIALITAGLMSLAFMGFSGLV.

Belongs to the NqrDE/RnfAE family. In terms of assembly, the complex is composed of six subunits: RnfA, RnfB, RnfC, RnfD, RnfE and RnfG.

The protein localises to the cell inner membrane. Its function is as follows. Part of a membrane-bound complex that couples electron transfer with translocation of ions across the membrane. This chain is Ion-translocating oxidoreductase complex subunit A, found in Histophilus somni (strain 129Pt) (Haemophilus somnus).